The primary structure comprises 881 residues: Protein P (881 aa).

The terminal protein domain (TP) stretch occupies residues 1 to 184 (MHPFYQLFRN…GKPYSWEHRQ (184 aa)). Positions 185-384 (LEQHNGQQHK…YCLHHIVSSI (200 aa)) are spacer. The tract at residues 263–351 (IPCESKAPSE…PAGICRGTES (89 aa)) is disordered. Composition is skewed to polar residues over residues 270-279 (PSEQQQSSLR) and 287-314 (NQIQ…IQSG). Residues 326–340 (FERHTPSFDNEKSDR) show a composition bias toward basic and acidic residues. The interval 385-726 (DDWGPCTFDG…YGELWPVARQ (342 aa)) is polymerase/reverse transcriptase domain (RT). The Reverse transcriptase domain occupies 395–636 (DVTIRSPRTP…HTLHFMGYTI (242 aa)). Mg(2+)-binding residues include Asp467, Asp587, and Asp588.

It belongs to the hepadnaviridae P protein family.

It catalyses the reaction DNA(n) + a 2'-deoxyribonucleoside 5'-triphosphate = DNA(n+1) + diphosphate. The catalysed reaction is Endonucleolytic cleavage to 5'-phosphomonoester.. Activated by host HSP70 and HSP40 in vitro to be able to bind the epsilon loop of the pgRNA. Because deletion of the RNase H region renders the protein partly chaperone-independent, the chaperones may be needed indirectly to relieve occlusion of the RNA-binding site by this domain. Inhibited by several reverse-transcriptase inhibitors: Lamivudine, Adefovir and Entecavir. Its function is as follows. Multifunctional enzyme that converts the viral RNA genome into dsDNA in viral cytoplasmic capsids. This enzyme displays a DNA polymerase activity that can copy either DNA or RNA templates, and a ribonuclease H (RNase H) activity that cleaves the RNA strand of RNA-DNA heteroduplexes in a partially processive 3'- to 5'-endonucleasic mode. Neo-synthesized pregenomic RNA (pgRNA) are encapsidated together with the P protein, and reverse-transcribed inside the nucleocapsid. Initiation of reverse-transcription occurs first by binding the epsilon loop on the pgRNA genome, and is initiated by protein priming, thereby the 5'-end of (-)DNA is covalently linked to P protein. Partial (+)DNA is synthesized from the (-)DNA template and generates the relaxed circular DNA (RC-DNA) genome. After budding and infection, the RC-DNA migrates in the nucleus, and is converted into a plasmid-like covalently closed circular DNA (cccDNA). The activity of P protein does not seem to be necessary for cccDNA generation, and is presumably released from (+)DNA by host nuclear DNA repair machinery. The polypeptide is Protein P (Ground squirrel hepatitis virus (strain 27) (GSHV)).